The chain runs to 209 residues: Transcription elongation factor A protein-like 4 (209 aa).

An N-acetylmethionine modification is found at Met-1. Residues 1-125 (MEKLYNENEG…VPRKAKRKTN (125 aa)) form a disordered region. Residues 25 to 96 (QDERKPEVAC…GSEREGKPES (72 aa)) are compositionally biased toward basic and acidic residues. Ser-88 and Ser-96 each carry phosphoserine.

The protein belongs to the TFS-II family. TFA subfamily.

Its subcellular location is the nucleus. In terms of biological role, may be involved in transcriptional regulation. The polypeptide is Transcription elongation factor A protein-like 4 (TCEAL4) (Pongo abelii (Sumatran orangutan)).